A 490-amino-acid polypeptide reads, in one-letter code: Betaine aldehyde dehydrogenase (490 aa).

The K(+) site is built by isoleucine 27 and aspartate 93. 150–152 (GAW) contacts NAD(+). Catalysis depends on lysine 162, which acts as the Charge relay system. Residue 176 to 179 (KPSE) coordinates NAD(+). Residue valine 180 coordinates K(+). Position 230 to 233 (230 to 233 (GTDT)) interacts with NAD(+). K(+) is bound at residue leucine 246. Glutamate 252 serves as the catalytic Proton acceptor. Residues glycine 254, cysteine 286, and glutamate 387 each coordinate NAD(+). Cysteine 286 functions as the Nucleophile in the catalytic mechanism. Cysteine sulfenic acid (-SOH) is present on cysteine 286. Residues lysine 457 and glycine 460 each coordinate K(+). Glutamate 464 (charge relay system) is an active-site residue.

This sequence belongs to the aldehyde dehydrogenase family. In terms of assembly, dimer of dimers. Requires K(+) as cofactor.

The enzyme catalyses betaine aldehyde + NAD(+) + H2O = glycine betaine + NADH + 2 H(+). The protein operates within amine and polyamine biosynthesis; betaine biosynthesis via choline pathway; betaine from betaine aldehyde: step 1/1. Functionally, involved in the biosynthesis of the osmoprotectant glycine betaine. Catalyzes the irreversible oxidation of betaine aldehyde to the corresponding acid. In Pseudomonas fluorescens (strain ATCC BAA-477 / NRRL B-23932 / Pf-5), this protein is Betaine aldehyde dehydrogenase.